Here is a 143-residue protein sequence, read N- to C-terminus: MNAKKRKGSAVERNIVGKLRDKGFAVVRAPASGSKRKDPIPDIIALKSGVIILIEMKSRKDKEGKIYVRREQAEGIMEFARKSGGTLFLGVKKPGVLKFIPFDKLRRTETGNYVADSEIEGLDLEDLVRLVEAKVSKTLDNFL.

Glutamate 12 contacts Mg(2+). Residue serine 32 is part of the active site. Mg(2+) is bound by residues aspartate 42 and glutamate 55.

This sequence belongs to the Holliday junction resolvase Hjc family. As to quaternary structure, homodimer. Requires Mg(2+) as cofactor.

The enzyme catalyses Endonucleolytic cleavage at a junction such as a reciprocal single-stranded crossover between two homologous DNA duplexes (Holliday junction).. A structure-specific endonuclease that resolves Holliday junction (HJ) intermediates during genetic recombination. Cleaves 4-way DNA junctions introducing paired nicks in opposing strands, leaving a 5'-terminal phosphate and a 3'-terminal hydroxyl group that are subsequently ligated to produce recombinant products. Functionally, hjc, Hjm (Hel308) and PINA coordinate HJ migration and cleavage of replication forks in a coordinated way. The sequence is that of Crossover junction endodeoxyribonuclease Hjc from Saccharolobus islandicus (strain REY15A) (Sulfolobus islandicus).